Here is a 488-residue protein sequence, read N- to C-terminus: Ribulose bisphosphate carboxylase large chain (488 aa).

Substrate is bound by residues Asn-127 and Thr-177. The Proton acceptor role is filled by Lys-179. Lys-181 lines the substrate pocket. 3 residues coordinate Mg(2+): Lys-205, Asp-207, and Glu-208. Lys-205 is subject to N6-carboxylysine. His-297 functions as the Proton acceptor in the catalytic mechanism. Residues Arg-298, His-330, and Ser-382 each contribute to the substrate site.

It belongs to the RuBisCO large chain family. Type I subfamily. Heterohexadecamer of 8 large chains and 8 small chains. It depends on Mg(2+) as a cofactor.

It is found in the plastid. It localises to the chloroplast. The catalysed reaction is 2 (2R)-3-phosphoglycerate + 2 H(+) = D-ribulose 1,5-bisphosphate + CO2 + H2O. It catalyses the reaction D-ribulose 1,5-bisphosphate + O2 = 2-phosphoglycolate + (2R)-3-phosphoglycerate + 2 H(+). RuBisCO catalyzes two reactions: the carboxylation of D-ribulose 1,5-bisphosphate, the primary event in carbon dioxide fixation, as well as the oxidative fragmentation of the pentose substrate in the photorespiration process. Both reactions occur simultaneously and in competition at the same active site. This chain is Ribulose bisphosphate carboxylase large chain, found in Pyropia suborbiculata (Red alga).